We begin with the raw amino-acid sequence, 127 residues long: uncharacterized protein (127 aa).

Residues 84–103 (IALLSLFISLSIRITCFPFF) traverse the membrane as a helical segment.

The protein localises to the membrane. This is an uncharacterized protein from Saccharomyces cerevisiae (strain ATCC 204508 / S288c) (Baker's yeast).